A 370-amino-acid polypeptide reads, in one-letter code: UDP-N-acetylglucosamine--N-acetylmuramyl-(pentapeptide) pyrophosphoryl-undecaprenol N-acetylglucosamine transferase (370 aa).

Residues 10 to 12 (TGG), Asn126, Ser200, Ile255, and Gln300 each bind UDP-N-acetyl-alpha-D-glucosamine.

This sequence belongs to the glycosyltransferase 28 family. MurG subfamily.

Its subcellular location is the cell membrane. The enzyme catalyses Mur2Ac(oyl-L-Ala-gamma-D-Glu-L-Lys-D-Ala-D-Ala)-di-trans,octa-cis-undecaprenyl diphosphate + UDP-N-acetyl-alpha-D-glucosamine = beta-D-GlcNAc-(1-&gt;4)-Mur2Ac(oyl-L-Ala-gamma-D-Glu-L-Lys-D-Ala-D-Ala)-di-trans,octa-cis-undecaprenyl diphosphate + UDP + H(+). Its pathway is cell wall biogenesis; peptidoglycan biosynthesis. Cell wall formation. Catalyzes the transfer of a GlcNAc subunit on undecaprenyl-pyrophosphoryl-MurNAc-pentapeptide (lipid intermediate I) to form undecaprenyl-pyrophosphoryl-MurNAc-(pentapeptide)GlcNAc (lipid intermediate II). This chain is UDP-N-acetylglucosamine--N-acetylmuramyl-(pentapeptide) pyrophosphoryl-undecaprenol N-acetylglucosamine transferase, found in Lactobacillus gasseri (strain ATCC 33323 / DSM 20243 / BCRC 14619 / CIP 102991 / JCM 1131 / KCTC 3163 / NCIMB 11718 / NCTC 13722 / AM63).